The following is a 42-amino-acid chain: Hemoglobin subunit beta-A (42 aa).

One can recognise a Globin domain in the interval 2–42 (EWTDAERSAILSLWGKIDTDELGPALLARLXLVXXXTQRYF).

It belongs to the globin family. In terms of assembly, heterotetramer of two alpha chains and two beta chains. As to expression, red blood cells.

Involved in oxygen transport from gills to the various peripheral tissues. The protein is Hemoglobin subunit beta-A of Catostomus clarkii (Desert sucker).